Consider the following 201-residue polypeptide: tRNA (guanine-N(7)-)-methyltransferase (201 aa).

4 residues coordinate S-adenosyl-L-methionine: Glu33, Glu58, Asp85, and Asp106. Asp106 is a catalytic residue. Substrate is bound by residues Lys110, Asp142, and 180–183; that span reads TTYE.

Belongs to the class I-like SAM-binding methyltransferase superfamily. TrmB family.

It catalyses the reaction guanosine(46) in tRNA + S-adenosyl-L-methionine = N(7)-methylguanosine(46) in tRNA + S-adenosyl-L-homocysteine. It participates in tRNA modification; N(7)-methylguanine-tRNA biosynthesis. In terms of biological role, catalyzes the formation of N(7)-methylguanine at position 46 (m7G46) in tRNA. This Mesomycoplasma hyopneumoniae (strain J / ATCC 25934 / NCTC 10110) (Mycoplasma hyopneumoniae) protein is tRNA (guanine-N(7)-)-methyltransferase.